Consider the following 79-residue polypeptide: Acyl carrier protein (79 aa).

Positions 1 to 79 constitute a Carrier domain; the sequence is MTKEQILVDV…DVVSYIETQV (79 aa). An O-(pantetheine 4'-phosphoryl)serine modification is found at Ser39.

The protein belongs to the acyl carrier protein (ACP) family. 4'-phosphopantetheine is transferred from CoA to a specific serine of apo-ACP by AcpS. This modification is essential for activity because fatty acids are bound in thioester linkage to the sulfhydryl of the prosthetic group.

The protein localises to the cytoplasm. It functions in the pathway lipid metabolism; fatty acid biosynthesis. Carrier of the growing fatty acid chain in fatty acid biosynthesis. The chain is Acyl carrier protein from Exiguobacterium sibiricum (strain DSM 17290 / CCUG 55495 / CIP 109462 / JCM 13490 / 255-15).